The sequence spans 327 residues: MKNWKKAIALVASAAALVSVAACGSSNAGGSSDSGKKTVGFVAVGPEGGFRTANEKDIQKAFEDAGFDLTYSPTQNNDQQKQIQAFNKFVNDEVDAIILSSTEDSGWDDSLKKAAEAEIPVFTVDRNVDVKDAEAKKAIVAHIGPSNVWCGEQAAEFVNKNFPDGANGFILEGPAGLSVVKDRGTGWGNKVASNVKVLESQSANWSTDEAKTVTAGLLDKYKSDNPQFIFAQNDEMGLGAAQAVDAAGLKGKVKIITIDGTKNALQALVDGDLSYVIEYNPIFGKETAQAVKDYLDGKTVEKDIEIESKTFDAASAKEALDNNTRAY.

A signal peptide spans 1–22 (MKNWKKAIALVASAAALVSVAA). Residue Cys23 is the site of N-palmitoyl cysteine attachment. Residue Cys23 is the site of S-diacylglycerol cysteine attachment.

It belongs to the bacterial solute-binding protein 2 family. In terms of assembly, the complex is composed of an ATP-binding protein (FruK), two transmembrane proteins (FruF and FruG) and a solute-binding protein (FruE).

The protein resides in the cell membrane. Part of the high-affinity ABC transporter complex FruEKFG involved in fructose uptake. Can also transport ribose and xylose, with lower affinity. Binds fructose, ribose and xylose, with fructose as the preferred substrate. In Bifidobacterium longum (strain NCC 2705), this protein is Fructose import binding protein FruE.